A 160-amino-acid polypeptide reads, in one-letter code: Lipoprotein signal peptidase (160 aa).

2 helical membrane-spanning segments follow: residues 63-83 (YRLP…AVTF) and 89-109 (DQHL…GNLI). Residues D119 and D137 contribute to the active site. The helical transmembrane segment at 132–152 (AFNVADSAICVGVALLAVDMI) threads the bilayer.

Belongs to the peptidase A8 family.

The protein localises to the cell inner membrane. The catalysed reaction is Release of signal peptides from bacterial membrane prolipoproteins. Hydrolyzes -Xaa-Yaa-Zaa-|-(S,diacylglyceryl)Cys-, in which Xaa is hydrophobic (preferably Leu), and Yaa (Ala or Ser) and Zaa (Gly or Ala) have small, neutral side chains.. The protein operates within protein modification; lipoprotein biosynthesis (signal peptide cleavage). Its function is as follows. This protein specifically catalyzes the removal of signal peptides from prolipoproteins. This is Lipoprotein signal peptidase from Geobacter sulfurreducens (strain ATCC 51573 / DSM 12127 / PCA).